A 367-amino-acid chain; its full sequence is Probable thylakoidal processing peptidase 2, chloroplastic (367 aa).

The transit peptide at 1–68 (MAIRVTFTYS…NTWGPSSGPR (68 aa)) directs the protein to the chloroplast. The tract at residues 53–72 (DKSPGSNTWGPSSGPRARPA) is disordered. The span at 62 to 72 (GPSSGPRARPA) shows a compositional bias: low complexity. Residues 185-205 (EDAKAAFTAVTVSLLFRSALA) form a helical membrane-spanning segment. The Lumenal, thylakoid portion of the chain corresponds to 206–367 (EPKSIPSTSM…VSQKRAVDVS (162 aa)). The active site involves Ser214.

The protein belongs to the peptidase S26 family.

It is found in the plastid. The protein localises to the chloroplast thylakoid membrane. It catalyses the reaction Cleavage of hydrophobic, N-terminal signal or leader sequences from secreted and periplasmic proteins.. Cleaves the thylakoid-transfer domain from a chloroplast protein. This Arabidopsis thaliana (Mouse-ear cress) protein is Probable thylakoidal processing peptidase 2, chloroplastic (TPP2).